The primary structure comprises 63 residues: uncharacterized protein (63 aa).

This is an uncharacterized protein from Azospirillum brasilense.